The chain runs to 282 residues: tRNA N(3)-cytidine methyltransferase METTL6 (282 aa).

The S-adenosyl-L-methionine site is built by Trp-45, Tyr-49, Gly-87, Asp-110, Asp-136, Leu-137, and Ile-157.

It belongs to the methyltransferase superfamily. METL family. As to quaternary structure, monomer. Interacts with SARS1/SerRS; interaction is mediated via tRNA(Ser) and is required for N(3)-methylcytidine methylation.

The protein localises to the cytoplasm. The protein resides in the nucleus. It carries out the reaction cytidine(32) in tRNA(Ser) + S-adenosyl-L-methionine = N(3)-methylcytidine(32) in tRNA(Ser) + S-adenosyl-L-homocysteine + H(+). Its function is as follows. S-adenosyl-L-methionine-dependent methyltransferase that mediates N(3)-methylcytidine modification of residue 32 of the tRNA anticodon loop of tRNA(Ser), including tRNA(Ser)(UGA) and tRNA(Ser)(GCU). Interaction with SARS1/SerRS is required for N(3)-methylcytidine methylation. This Mus musculus (Mouse) protein is tRNA N(3)-cytidine methyltransferase METTL6.